The sequence spans 282 residues: Phosphate import ATP-binding protein PstB (282 aa).

The ABC transporter domain maps to 36–277 (IEVKNLNFFY…PARKETEDYI (242 aa)). 68–75 (GPSGCGKS) contributes to the ATP binding site.

The protein belongs to the ABC transporter superfamily. Phosphate importer (TC 3.A.1.7) family. The complex is composed of two ATP-binding proteins (PstB), two transmembrane proteins (PstC and PstA) and a solute-binding protein (PstS).

It is found in the cell inner membrane. It carries out the reaction phosphate(out) + ATP + H2O = ADP + 2 phosphate(in) + H(+). Part of the ABC transporter complex PstSACB involved in phosphate import. Responsible for energy coupling to the transport system. In Burkholderia pseudomallei (strain 1710b), this protein is Phosphate import ATP-binding protein PstB.